Consider the following 444-residue polypeptide: Homogentisate 1,2-dioxygenase (444 aa).

H298 functions as the Proton acceptor in the catalytic mechanism. Residues H341 and E347 each coordinate Fe cation. Y356 and H377 together coordinate homogentisate. H377 is a binding site for Fe cation.

It belongs to the homogentisate dioxygenase family. Hexamer; dimer of trimers. The cofactor is Fe cation.

The catalysed reaction is homogentisate + O2 = 4-maleylacetoacetate + H(+). The protein operates within amino-acid degradation; L-phenylalanine degradation; acetoacetate and fumarate from L-phenylalanine: step 4/6. Functionally, involved in the catabolism of homogentisate (2,5-dihydroxyphenylacetate or 2,5-OH-PhAc), a central intermediate in the degradation of phenylalanine and tyrosine. Catalyzes the oxidative ring cleavage of the aromatic ring of homogentisate to yield maleylacetoacetate. In Burkholderia cenocepacia (strain ATCC BAA-245 / DSM 16553 / LMG 16656 / NCTC 13227 / J2315 / CF5610) (Burkholderia cepacia (strain J2315)), this protein is Homogentisate 1,2-dioxygenase.